We begin with the raw amino-acid sequence, 259 residues long: MADDFDTGDMFKDPEGFYPPEKEPTFAEHRMLSGQVVRVRLVGSHPLYGNMLWNAGRISSEYIETHAPTLIAGKDVLEIGAAAGVPSIVSAIMGARTTVMTDYPDPDLVDNMRQNADASASMIPTDPPSSLHVTGYKWGSDVEPLKAYLPEESRADGFDVLIMADVVYSHREHGNLVKTMQETLKRQKDAVALVIFTPYEPWLLPQTERFFPLAEQGGFTVTKVFEKLTEKLLFENDPGDERLRRTVFGYELRWKDELR.

S-adenosyl-L-methionine-binding positions include W53, 80–82, D102, W138, and A164; that span reads GAA.

The protein belongs to the class I-like SAM-binding methyltransferase superfamily. EFM7 family.

Its subcellular location is the cytoplasm. In terms of biological role, S-adenosyl-L-methionine-dependent protein methyltransferase that trimethylates the N-terminal glycine 'Gly-2' of elongation factor 1-alpha, before also catalyzing the mono- and dimethylation of 'Lys-3'. The chain is Protein N-terminal and lysine N-methyltransferase efm7 from Emericella nidulans (strain FGSC A4 / ATCC 38163 / CBS 112.46 / NRRL 194 / M139) (Aspergillus nidulans).